The following is a 550-amino-acid chain: Dihydroxy-acid dehydratase (550 aa).

A Mg(2+)-binding site is contributed by D78. Residue C119 coordinates [2Fe-2S] cluster. Residues D120 and K121 each coordinate Mg(2+). K121 is subject to N6-carboxylysine. C191 lines the [2Fe-2S] cluster pocket. Residue E440 coordinates Mg(2+). S466 (proton acceptor) is an active-site residue.

The protein belongs to the IlvD/Edd family. Homodimer. Requires [2Fe-2S] cluster as cofactor. It depends on Mg(2+) as a cofactor.

It catalyses the reaction (2R)-2,3-dihydroxy-3-methylbutanoate = 3-methyl-2-oxobutanoate + H2O. The catalysed reaction is (2R,3R)-2,3-dihydroxy-3-methylpentanoate = (S)-3-methyl-2-oxopentanoate + H2O. It participates in amino-acid biosynthesis; L-isoleucine biosynthesis; L-isoleucine from 2-oxobutanoate: step 3/4. Its pathway is amino-acid biosynthesis; L-valine biosynthesis; L-valine from pyruvate: step 3/4. Functions in the biosynthesis of branched-chain amino acids. Catalyzes the dehydration of (2R,3R)-2,3-dihydroxy-3-methylpentanoate (2,3-dihydroxy-3-methylvalerate) into 2-oxo-3-methylpentanoate (2-oxo-3-methylvalerate) and of (2R)-2,3-dihydroxy-3-methylbutanoate (2,3-dihydroxyisovalerate) into 2-oxo-3-methylbutanoate (2-oxoisovalerate), the penultimate precursor to L-isoleucine and L-valine, respectively. In Methanococcus maripaludis (strain DSM 14266 / JCM 13030 / NBRC 101832 / S2 / LL), this protein is Dihydroxy-acid dehydratase.